Consider the following 347-residue polypeptide: High mobility group protein 20A (347 aa).

Polar residues-rich tracts occupy residues 1–10 (MENLMTSSTL) and 40–49 (SGATSSTNNP). 2 disordered regions span residues 1-113 (MENL…YVRF) and 179-211 (FSRK…TEVK). Low complexity predominate over residues 55 to 66 (LSQGQLLQSESS). A compositionally biased stretch (basic and acidic residues) spans 72-82 (NEQRHEDEQRS). The segment covering 83–96 (KRGGWSKGRKRKKP) has biased composition (basic residues). Positions 103 to 171 (PKSPLTGYVR…RYMKELEQYQ (69 aa)) form a DNA-binding region, HMG box. S105 carries the post-translational modification Phosphoserine. The segment covering 182–211 (KTQDRQKGKSHRQDAARQATHDHEKETEVK) has biased composition (basic and acidic residues). Residues 229–273 (SKAREAELRQLRKSNMEFEERNAALQKHVESMRTAVEKLEVDVIQ) adopt a coiled-coil conformation.

In terms of assembly, interacts with DTNB. In terms of tissue distribution, ubiquitous.

It localises to the nucleus. Functionally, plays a role in neuronal differentiation as chromatin-associated protein. Acts as inhibitor of HMG20B. Overcomes the repressive effects of the neuronal silencer REST and induces the activation of neuronal-specific genes. Involved in the recruitment of the histone methyltransferase KMT2A/MLL1 and consequent increased methylation of histone H3 lysine 4. This chain is High mobility group protein 20A (HMG20A), found in Homo sapiens (Human).